The chain runs to 317 residues: Aspartate carbamoyltransferase catalytic subunit (317 aa).

Carbamoyl phosphate-binding residues include Arg66 and Thr67. Lys94 contributes to the L-aspartate binding site. Residues Arg116, His144, and Gln147 each coordinate carbamoyl phosphate. Residues Arg177 and Arg231 each coordinate L-aspartate. Gly272 and Pro273 together coordinate carbamoyl phosphate.

It belongs to the aspartate/ornithine carbamoyltransferase superfamily. ATCase family. As to quaternary structure, heterododecamer (2C3:3R2) of six catalytic PyrB chains organized as two trimers (C3), and six regulatory PyrI chains organized as three dimers (R2).

It carries out the reaction carbamoyl phosphate + L-aspartate = N-carbamoyl-L-aspartate + phosphate + H(+). It functions in the pathway pyrimidine metabolism; UMP biosynthesis via de novo pathway; (S)-dihydroorotate from bicarbonate: step 2/3. In terms of biological role, catalyzes the condensation of carbamoyl phosphate and aspartate to form carbamoyl aspartate and inorganic phosphate, the committed step in the de novo pyrimidine nucleotide biosynthesis pathway. This is Aspartate carbamoyltransferase catalytic subunit from Nitrobacter winogradskyi (strain ATCC 25391 / DSM 10237 / CIP 104748 / NCIMB 11846 / Nb-255).